We begin with the raw amino-acid sequence, 421 residues long: MYAFVRFLEDNVCYALPVSCVRDFSPRSRLDFDNQKVYAVYRGPEELGAEPESPPRAPRDWGALLLHKAQILALAEDKSDLENSVMQKKIKIPKLSLSHVEDDGEVKDYGEEDLQLRHIKRPEGRKPSEAAHKSIEAVVARLERQNGLSLGHSTCPEEVFVEASPGTEDMDSLEDAVVPRALYEELLRNYQQQQEEMRHLQQELERTRRQLVQQAKKLKEYGALVSEMKELRDLNRRLQDVLLLRLGSGPAIDLEKVKSECLEPEPELRSTFSEEANTSSYYPAPAPVMDKYILDNGKVHLGSGIWVDEEKWHQLQVTQGDSKYTKNLAVMIWGTDVLKNRSVTGVATKKKKDAIPKPPLSPHKLSIVRECLYDRIAQETVDETEIAQRLSKVNKYICEKIMDINKSCKNEERREAKYNLQ.

Lys133 is subject to N6-acetyllysine. A coiled-coil region spans residues Arg180–Leu243. A Glycyl lysine isopeptide (Lys-Gly) (interchain with G-Cter in SUMO2) cross-link involves residue Lys258. In terms of domain architecture, BEN spans Gly302–Cys408.

Its function is as follows. Acts as a transcriptional repressor. The chain is BEN domain-containing protein 5 (Bend5) from Mus musculus (Mouse).